We begin with the raw amino-acid sequence, 252 residues long: Trans-aconitate 2-methyltransferase (252 aa).

The protein belongs to the methyltransferase superfamily. Tam family.

It localises to the cytoplasm. It catalyses the reaction trans-aconitate + S-adenosyl-L-methionine = (E)-3-(methoxycarbonyl)pent-2-enedioate + S-adenosyl-L-homocysteine. In terms of biological role, catalyzes the S-adenosylmethionine monomethyl esterification of trans-aconitate. This is Trans-aconitate 2-methyltransferase from Escherichia coli (strain 55989 / EAEC).